Here is a 294-residue protein sequence, read N- to C-terminus: Non-selective voltage-gated ion channel VDAC2 (294 aa).

N-acetylalanine is present on alanine 2. ATP contacts are provided by lysine 23 and lysine 31. An N6-acetyllysine; alternate modification is found at lysine 31. Lysine 31 carries the N6-succinyllysine; alternate modification. Lysine 31 is covalently cross-linked (Glycyl lysine isopeptide (Lys-Gly) (interchain with G-Cter in ubiquitin); alternate). The next 2 beta stranded transmembrane spans lie at 37–46 (LVKLDVKTKS) and 50–58 (VEFSTSGSS). Residues lysine 64 and lysine 72 each participate in a glycyl lysine isopeptide (Lys-Gly) (interchain with G-Cter in ubiquitin) cross-link. A beta stranded membrane pass occupies residues 65–75 (VTGTLETKYKW). A Phosphotyrosine modification is found at tyrosine 78. The next 3 beta stranded transmembrane spans lie at 80–87 (LTFTEKWN), 91–100 (TLGTEIAIED), and 106–115 (LKLTFDTTFS). Residue threonine 118 is modified to Phosphothreonine. Lysine 120 is modified (N6-acetyllysine; alternate). Residue lysine 120 forms a Glycyl lysine isopeptide (Lys-Gly) (interchain with G-Cter in ubiquitin); alternate linkage. Glycyl lysine isopeptide (Lys-Gly) (interchain with G-Cter in ubiquitin) cross-links involve residues lysine 121 and lysine 124. Beta stranded transmembrane passes span 122-131 (SGKIKSSYKR), 134-141 (INLGCDVD), 148-156 (AIHGSAVFG), and 161-169 (LAGYQMTFD). Lysine 172 participates in a covalent cross-link: Glycyl lysine isopeptide (Lys-Gly) (interchain with G-Cter in ubiquitin). 6 consecutive transmembrane segments (beta stranded) span residues 174–186 (KLTRNNFAVGYRT), 189–196 (FQLHTNVN), 200–209 (EFGGSIYQKV), 213–222 (LDTSVNLAWT), 229–238 (RFGIAAKYQL), and 242–249 (ASISAKVN). Residue serine 251 is modified to Phosphoserine. Residues 253-255 (LIG) and 271-275 (SALVD) each bind NAD(+). The next 2 membrane-spanning stretches (beta stranded) occupy residues 253–262 (LIGVGYTQTL) and 265–274 (GVKLTLSALV). Lysine 277 bears the N6-acetyllysine; alternate mark. A Glycyl lysine isopeptide (Lys-Gly) (interchain with G-Cter in ubiquitin); alternate cross-link involves residue lysine 277. The chain crosses the membrane as a beta stranded span at residues 284 to 293 (HKVGLALELE). Lysine 285 participates in a covalent cross-link: Glycyl lysine isopeptide (Lys-Gly) (interchain with G-Cter in ubiquitin).

The protein belongs to the eukaryotic mitochondrial porin family. In terms of assembly, monomer, homodimer and higher order oligomers; formation of higher order structures is necessary for scramblase activity. Interacts with ARMC12 in a TBC1D21-dependent manner. Interacts with KLC3. Interacts with SPATA33. Interacts with PPP3CC in a SPATA33-dependent manner. In terms of processing, ubiquitinated by PRKN during mitophagy, leading to its degradation and enhancement of mitophagy. Deubiquitinated by USP30. Expressed in erythrocytes (at protein level). Expressed in all tissues examined.

It localises to the mitochondrion outer membrane. Its subcellular location is the membrane. The enzyme catalyses chloride(in) = chloride(out). It carries out the reaction K(+)(in) = K(+)(out). The catalysed reaction is a 1,2-diacyl-sn-glycero-3-phospho-L-serine(in) = a 1,2-diacyl-sn-glycero-3-phospho-L-serine(out). It catalyses the reaction a 1,2-diacyl-sn-glycero-3-phosphocholine(in) = a 1,2-diacyl-sn-glycero-3-phosphocholine(out). The enzyme catalyses a 1,2-diacyl-sn-glycero-3-phospho-(1D-myo-inositol)(in) = a 1,2-diacyl-sn-glycero-3-phospho-(1D-myo-inositol)(out). Non-selective voltage-gated ion channel that mediates the transport of anions and cations through the mitochondrion outer membrane and plasma membrane. The channel adopts an open conformation at zero mV and a closed conformation at both positive and negative potentials. There are two populations of channels; the main that functions in a lower open-state conductance with lower ion selectivity, that switch, in a voltage-dependent manner, from the open to a low-conducting 'closed' state and the other that has a normal ion selectivity in the typical high conductance, 'open' state. Binds various lipids, including the sphingolipid ceramide, the phospholipid phosphatidylcholine, and the sterols cholesterol and oxysterol. Binding of ceramide promotes the mitochondrial outer membrane permeabilization (MOMP) apoptotic pathway. Functionally, catalyzes the scrambling of phospholipids across the outer mitochondrial membrane; the mechanism is unrelated to channel activity and is capable of translocating both anionic and zwitterionic phospholipids. The sequence is that of Non-selective voltage-gated ion channel VDAC2 from Homo sapiens (Human).